Reading from the N-terminus, the 242-residue chain is Type III pantothenate kinase (242 aa).

7–14 (DLGNSRFK) contacts ATP. Substrate-binding positions include Tyr91 and 98-101 (GVDR). Asp100 serves as the catalytic Proton acceptor. Residue Thr121 participates in ATP binding. Position 171 (Thr171) interacts with substrate.

Belongs to the type III pantothenate kinase family. As to quaternary structure, homodimer. NH4(+) serves as cofactor. K(+) is required as a cofactor.

The protein resides in the cytoplasm. The catalysed reaction is (R)-pantothenate + ATP = (R)-4'-phosphopantothenate + ADP + H(+). It functions in the pathway cofactor biosynthesis; coenzyme A biosynthesis; CoA from (R)-pantothenate: step 1/5. Functionally, catalyzes the phosphorylation of pantothenate (Pan), the first step in CoA biosynthesis. In Xanthomonas euvesicatoria pv. vesicatoria (strain 85-10) (Xanthomonas campestris pv. vesicatoria), this protein is Type III pantothenate kinase.